The following is a 193-amino-acid chain: Large ribosomal subunit protein uL5 (193 aa).

It belongs to the universal ribosomal protein uL5 family. As to quaternary structure, part of the 50S ribosomal subunit; part of the 5S rRNA/L5/L18/L25 subcomplex. Contacts the 5S rRNA and the P site tRNA. Forms a bridge to the 30S subunit in the 70S ribosome.

Its function is as follows. This is one of the proteins that bind and probably mediate the attachment of the 5S RNA into the large ribosomal subunit, where it forms part of the central protuberance. In the 70S ribosome it contacts protein S13 of the 30S subunit (bridge B1b), connecting the 2 subunits; this bridge is implicated in subunit movement. Contacts the P site tRNA; the 5S rRNA and some of its associated proteins might help stabilize positioning of ribosome-bound tRNAs. The chain is Large ribosomal subunit protein uL5 from Pseudarthrobacter chlorophenolicus (strain ATCC 700700 / DSM 12829 / CIP 107037 / JCM 12360 / KCTC 9906 / NCIMB 13794 / A6) (Arthrobacter chlorophenolicus).